Reading from the N-terminus, the 287-residue chain is ATP synthase gamma chain (287 aa).

It belongs to the ATPase gamma chain family. In terms of assembly, F-type ATPases have 2 components, CF(1) - the catalytic core - and CF(0) - the membrane proton channel. CF(1) has five subunits: alpha(3), beta(3), gamma(1), delta(1), epsilon(1). CF(0) has three main subunits: a, b and c.

The protein localises to the cell inner membrane. Produces ATP from ADP in the presence of a proton gradient across the membrane. The gamma chain is believed to be important in regulating ATPase activity and the flow of protons through the CF(0) complex. This Geobacter sp. (strain M21) protein is ATP synthase gamma chain.